The sequence spans 183 residues: Transmembrane protein 52B (183 aa).

A signal peptide spans 1-24 (MGVRVHVVAASALLYFILLSGTRC). A helical membrane pass occupies residues 40–60 (VHLWYIWLLVVIGALLLLCGL). Residues 158 to 183 (DLPPVPEEKQLPPTEKESTRIVDSWN) are disordered. Positions 163–177 (PEEKQLPPTEKESTR) are enriched in basic and acidic residues.

The protein localises to the membrane. This is Transmembrane protein 52B (TMEM52B) from Homo sapiens (Human).